We begin with the raw amino-acid sequence, 272 residues long: NH(3)-dependent NAD(+) synthetase (272 aa).

45-52 (GISGGQDS) provides a ligand contact to ATP. Asp51 is a Mg(2+) binding site. Position 138 (Arg138) interacts with deamido-NAD(+). Thr158 contacts ATP. A Mg(2+)-binding site is contributed by Glu163. Positions 171 and 178 each coordinate deamido-NAD(+). Residues Lys187 and Thr209 each coordinate ATP. 258-259 (HK) is a binding site for deamido-NAD(+).

It belongs to the NAD synthetase family. In terms of assembly, homodimer.

The enzyme catalyses deamido-NAD(+) + NH4(+) + ATP = AMP + diphosphate + NAD(+) + H(+). Its pathway is cofactor biosynthesis; NAD(+) biosynthesis; NAD(+) from deamido-NAD(+) (ammonia route): step 1/1. Functionally, catalyzes the ATP-dependent amidation of deamido-NAD to form NAD. Uses ammonia as a nitrogen source. In Bacillus cereus (strain Q1), this protein is NH(3)-dependent NAD(+) synthetase.